The chain runs to 247 residues: GTP cyclohydrolase 1 type 2 homolog (247 aa).

A divalent metal cation contacts are provided by His-63, His-64, Asp-101, His-215, and Glu-219.

It belongs to the GTP cyclohydrolase I type 2/NIF3 family. In terms of assembly, homohexamer.

The sequence is that of GTP cyclohydrolase 1 type 2 homolog from Yersinia pestis.